The sequence spans 91 residues: Class I hydrophobin 3 (91 aa).

An N-terminal signal peptide occupies residues 1 to 17; that stretch reads MLFRLFTIPSIALGVLG. Disulfide bonds link Cys-31/Cys-70, Cys-35/Cys-61, Cys-36/Cys-53, and Cys-71/Cys-87.

Belongs to the fungal hydrophobin family. Self-assembles to form functional amyloid fibrils called rodlets. Self-assembly into fibrillar rodlets occurs spontaneously at hydrophobic:hydrophilic interfaces and the rodlets further associate laterally to form amphipathic monolayers. In terms of tissue distribution, expressed in conidia.

Its subcellular location is the secreted. It is found in the cell wall. Aerial growth, conidiation, and dispersal of filamentous fungi in the environment rely upon a capability of their secreting small amphipathic proteins called hydrophobins (HPBs) with low sequence identity. Class I can self-assemble into an outermost layer of rodlet bundles on aerial cell surfaces, conferring cellular hydrophobicity that supports fungal growth, development and dispersal; whereas Class II form highly ordered films at water-air interfaces through intermolecular interactions but contribute nothing to the rodlet structure. HYD3 is a class I hydrophobin located on the conidial surface that activates specifically the humoral and cellular immunity of Metarhizium acridum's own host insect, Locusta migratoria manilensis (Meyen) but not that of other non-host insects. Improves the resistance of locusts to both specialist and generalist fungal pathogens (wide host range) when topically applied to the cuticle, but has no effect on the fungal resistance of other insects, including Spodoptera frugiperda and Galleria mellonella. This Metarhizium acridum (strain CQMa 102) protein is Class I hydrophobin 3.